A 489-amino-acid chain; its full sequence is Ammonium transporter MEP3 (489 aa).

At 1–17 (MARGDGHLWTETYDSST) the chain is on the extracellular side. Residues 18–38 (VAFMILGAALVFFMVPGLGFL) traverse the membrane as a helical segment. Residues 39-48 (YSGLARRKSA) lie on the Cytoplasmic side of the membrane. Residues 49–69 (LALIWVVIMATLVGILQWYFW) traverse the membrane as a helical segment. At 70–108 (GYSLAFSKTATNNKFIGNLDSFGFRNVYGKISDDSTYPE) the chain is on the extracellular side. A helical transmembrane segment spans residues 109 to 129 (LIYAIFQMMFMCVALSIIAGA). Residues 130–139 (TAERGKLFPH) are Cytoplasmic-facing. The chain crosses the membrane as a helical span at residues 140–160 (MVFLFVFATLVYCPITYWIWA). At 161 to 173 (PGGWAYQWGVLDW) the chain is on the extracellular side. The chain crosses the membrane as a helical span at residues 174-194 (AGGGNIEILSAVAGFVYSYFL). At 195–209 (GRRKENLLINFRPHN) the chain is on the cytoplasmic side. A helical transmembrane segment spans residues 210–230 (VSMVTLGTSILWFGWLLFNAA). The Extracellular portion of the chain corresponds to 231 to 239 (SSLSPNMRS). Residues 240-260 (VYAFMNTCLSATTGGMTWCLL) form a helical membrane-spanning segment. Over 261-267 (DYRSEKK) the chain is Cytoplasmic. The helical transmembrane segment at 268–288 (WSTVGLCSGIICGLVAATPSS) threads the bilayer. Residue Gly-289 is a topological domain, extracellular. Residues 290–310 (CITLYGSLIQGIIAGVVCNFA) form a helical membrane-spanning segment. At 311–330 (TKIKYYLKVDDSLDLLAEHG) the chain is on the cytoplasmic side. A helical membrane pass occupies residues 331-351 (IAGVVGLIFNALFAADWVIGM). The Extracellular segment spans residues 352–372 (DGTTKHKGGWLTHNWKQMYIQ). A helical membrane pass occupies residues 373–393 (IAYIGASAGYCAVVTAIICFV). Topologically, residues 394-489 (LGKIPGVHLR…NPKLHHAKEA (96 aa)) are cytoplasmic. The span at 448-481 (GANSASETNPTEDSQNSSLSSATVSGQNEKSNNP) shows a compositional bias: polar residues. Residues 448-489 (GANSASETNPTEDSQNSSLSSATVSGQNEKSNNPKLHHAKEA) form a disordered region.

Belongs to the ammonia transporter channel (TC 1.A.11.2) family.

The protein localises to the membrane. Transporter for ammonium (both charged and uncharged NH3 and NH4) to use as a nitrogen source. The affinity of MEP2 is about twenty times higher than that of MEP1. MEP3 has the lowest affinity. The chain is Ammonium transporter MEP3 (MEP3) from Saccharomyces cerevisiae (strain ATCC 204508 / S288c) (Baker's yeast).